A 56-amino-acid chain; its full sequence is Large ribosomal subunit protein bL32 (56 aa).

It belongs to the bacterial ribosomal protein bL32 family.

The polypeptide is Large ribosomal subunit protein bL32 (Prochlorococcus marinus (strain MIT 9215)).